The following is a 140-amino-acid chain: MASVGNQTVHTGNTVYLMIGNKIIGRAQSASGERQYGTQGIYEIGSIMPQEHVYLKYEGTITLERMRMKKEDLASLGITALGEDILQRDIIDIVMMDNLTKEIVVAYRGCSAISYSESFTANEVTSESTQFTYLTSAKVK.

It is found in the virion. The sequence is that of Virion protein 5 from Enterococcus faecalis (Streptococcus faecalis).